A 423-amino-acid polypeptide reads, in one-letter code: UPF0229 protein PSPTO_0546 (423 aa).

Positions 65–110 (HHGRGGKQTVVHPGNKEFTTGEHIARPQGGAGGKGPGKAGNSGEGM) are disordered. Residues 93–107 (GGAGGKGPGKAGNSG) are compositionally biased toward gly residues.

It belongs to the UPF0229 family.

In Pseudomonas syringae pv. tomato (strain ATCC BAA-871 / DC3000), this protein is UPF0229 protein PSPTO_0546.